A 215-amino-acid polypeptide reads, in one-letter code: Protein-L-isoaspartate O-methyltransferase (215 aa).

Ser-62 is an active-site residue.

Belongs to the methyltransferase superfamily. L-isoaspartyl/D-aspartyl protein methyltransferase family.

It is found in the cytoplasm. The catalysed reaction is [protein]-L-isoaspartate + S-adenosyl-L-methionine = [protein]-L-isoaspartate alpha-methyl ester + S-adenosyl-L-homocysteine. Functionally, catalyzes the methyl esterification of L-isoaspartyl residues in peptides and proteins that result from spontaneous decomposition of normal L-aspartyl and L-asparaginyl residues. It plays a role in the repair and/or degradation of damaged proteins. The chain is Protein-L-isoaspartate O-methyltransferase from Rhodopseudomonas palustris (strain BisA53).